Reading from the N-terminus, the 462-residue chain is Elongation factor 1-alpha (462 aa).

Residue Gly2 is modified to Blocked amino end (Gly). The tr-type G domain maps to 5–242 (KIHINIVVIG…DAILPPSRPT (238 aa)). Residues 14-21 (GHVDSGKS) are G1. GTP is bound at residue 14-21 (GHVDSGKS). The residue at position 36 (Lys36) is an N6,N6,N6-trimethyllysine. Lys55 is modified (N6-methyllysine). The G2 stretch occupies residues 70–74 (GITID). N6,N6,N6-trimethyllysine is present on Lys79. Residues 91–94 (DAPG) form a G3 region. GTP is bound by residues 91–95 (DAPGH) and 153–156 (NKMD). The tract at residues 153–156 (NKMD) is G4. The tract at residues 194-196 (SGW) is G5. An N6,N6,N6-trimethyllysine mark is found at Lys219 and Lys318. A 5-glutamyl glycerylphosphorylethanolamine modification is found at Glu374.

It belongs to the TRAFAC class translation factor GTPase superfamily. Classic translation factor GTPase family. EF-Tu/EF-1A subfamily. Post-translationally, the N-terminus is blocked.

Its subcellular location is the cytoplasm. Its function is as follows. This protein promotes the GTP-dependent binding of aminoacyl-tRNA to the A-site of ribosomes during protein biosynthesis. In Artemia salina (Brine shrimp), this protein is Elongation factor 1-alpha.